The primary structure comprises 205 residues: Small ribosomal subunit protein uS4 (205 aa).

The region spanning 94-157 (SRLDTVVYRM…KQIPLIQESV (64 aa)) is the S4 RNA-binding domain.

This sequence belongs to the universal ribosomal protein uS4 family. As to quaternary structure, part of the 30S ribosomal subunit. Contacts protein S5. The interaction surface between S4 and S5 is involved in control of translational fidelity.

In terms of biological role, one of the primary rRNA binding proteins, it binds directly to 16S rRNA where it nucleates assembly of the body of the 30S subunit. Its function is as follows. With S5 and S12 plays an important role in translational accuracy. This chain is Small ribosomal subunit protein uS4, found in Rickettsia conorii (strain ATCC VR-613 / Malish 7).